The primary structure comprises 96 residues: Teretoxin Tan6.14 (96 aa).

An N-terminal signal peptide occupies residues 1–21; it reads MRPLLVFVLMVSVSLAFSLEG. Positions 22–60 are excised as a propeptide; sequence MPNNGGDSVASITANQARRFKRNPLFSFAQHSLVDLKAR.

Post-translationally, contains 3 disulfide bonds. Expressed by the venom duct.

It localises to the secreted. The chain is Teretoxin Tan6.14 from Terebra anilis (Auger snail).